The chain runs to 471 residues: MELSSKKKLHALSLAEKIQVLELLDESKMSQSEVARRFQVSQPQISRICKNKEKLLADWCSGTANRERKRKRESKYSGIDEALLCWYHIARAKAWDVTGPMLLHKAKELADIMGQDFVPSIGWLVRWKRRNNVGFGARHVLAPSFPPEPPPPGLTSQAQLPLSLKDFSPEDVFGCAELPLLYRAVPGSFGACDQVQVLLCANSRGTEKRRVLLGGLQAAPRCFFGIRSEALPASYHPDLGIPWLEWLAQFDRDMGQQGRQVALLLAARVVEELAGLPGLYHVKLLPLAASSTTPPLPSSVVRAFKAHYRHRLLGKLAAIQSERDGTSLAEAGAGITVLDALHVASAAWAKVPPQLIFSSFIQEGLAPGKTPPSSHKTSEMPPVPGGLSLEEFSRFVDLEGEEPRSGVCKEEIGTEDEKGDREGAFEPLPTKADALRALGTLRRWFECNSTSPELFEKFYDCEEEVERLCCL.

The HTH psq-type domain occupies 3 to 55 (LSSKKKLHALSLAEKIQVLELLDESKMSQSEVARRFQVSQPQISRICKNKEKL). DNA-binding regions (H-T-H motif) lie at residues 31 to 51 (QSEVARRFQVSQPQISRICKN) and 100 to 130 (PMLLHKAKELADIMGQDFVPSIGWLVRWKRR). The region spanning 67–137 (ERKRKRESKY…KRRNNVGFGA (71 aa)) is the HTH CENPB-type domain. In terms of domain architecture, DDE-1 spans 167–360 (FSPEDVFGCA…VPPQLIFSSF (194 aa)).

Belongs to the tigger transposable element derived protein family.

The protein resides in the nucleus. This chain is Tigger transposable element-derived protein 3 (TIGD3), found in Homo sapiens (Human).